The primary structure comprises 107 residues: Inner membrane protein YgbE (107 aa).

At 1–20 (MRNSHNITLTNNDSLTEDEE) the chain is on the cytoplasmic side. The helical transmembrane segment at 21 to 43 (TTWSLPGAVVGFISWLFALAMPM) threads the bilayer. Topologically, residues 44–52 (LIYGSNTLF) are periplasmic. Residues 53–75 (FFIYTWPFFLALMPVAVVVGIAL) traverse the membrane as a helical segment. Residues 76–86 (HSLMDGKLRYS) are Cytoplasmic-facing. A helical membrane pass occupies residues 87-106 (IVFTLVTVGIMFGALFMWLL). G107 is a topological domain (periplasmic).

It is found in the cell inner membrane. The polypeptide is Inner membrane protein YgbE (ygbE) (Escherichia coli (strain K12)).